Consider the following 58-residue polypeptide: Protein translocase subunit SecE (58 aa).

The helical transmembrane segment at 36-56 (ILLIGFIGFLMFAIMSLLPGV) threads the bilayer.

Belongs to the SecE/SEC61-gamma family. In terms of assembly, component of the Sec protein translocase complex. Heterotrimer consisting of SecY (alpha), SecG (beta) and SecE (gamma) subunits. The heterotrimers can form oligomers, although 1 heterotrimer is thought to be able to translocate proteins. Interacts with the ribosome. May interact with SecDF, and other proteins may be involved.

The protein resides in the cell membrane. Functionally, essential subunit of the Sec protein translocation channel SecYEG. Clamps together the 2 halves of SecY. May contact the channel plug during translocation. This chain is Protein translocase subunit SecE, found in Halorubrum lacusprofundi (strain ATCC 49239 / DSM 5036 / JCM 8891 / ACAM 34).